We begin with the raw amino-acid sequence, 299 residues long: Phosphatidylserine decarboxylase proenzyme (299 aa).

Catalysis depends on charge relay system; for autoendoproteolytic cleavage activity residues D115, H171, and S258. S258 serves as the catalytic Schiff-base intermediate with substrate; via pyruvic acid; for decarboxylase activity. Residue S258 is modified to Pyruvic acid (Ser); by autocatalysis.

This sequence belongs to the phosphatidylserine decarboxylase family. PSD-B subfamily. Prokaryotic type II sub-subfamily. As to quaternary structure, heterodimer of a large membrane-associated beta subunit and a small pyruvoyl-containing alpha subunit. Requires pyruvate as cofactor. Post-translationally, is synthesized initially as an inactive proenzyme. Formation of the active enzyme involves a self-maturation process in which the active site pyruvoyl group is generated from an internal serine residue via an autocatalytic post-translational modification. Two non-identical subunits are generated from the proenzyme in this reaction, and the pyruvate is formed at the N-terminus of the alpha chain, which is derived from the carboxyl end of the proenzyme. The autoendoproteolytic cleavage occurs by a canonical serine protease mechanism, in which the side chain hydroxyl group of the serine supplies its oxygen atom to form the C-terminus of the beta chain, while the remainder of the serine residue undergoes an oxidative deamination to produce ammonia and the pyruvoyl prosthetic group on the alpha chain. During this reaction, the Ser that is part of the protease active site of the proenzyme becomes the pyruvoyl prosthetic group, which constitutes an essential element of the active site of the mature decarboxylase.

It localises to the cell membrane. It carries out the reaction a 1,2-diacyl-sn-glycero-3-phospho-L-serine + H(+) = a 1,2-diacyl-sn-glycero-3-phosphoethanolamine + CO2. It functions in the pathway phospholipid metabolism; phosphatidylethanolamine biosynthesis; phosphatidylethanolamine from CDP-diacylglycerol: step 2/2. Functionally, catalyzes the formation of phosphatidylethanolamine (PtdEtn) from phosphatidylserine (PtdSer). This chain is Phosphatidylserine decarboxylase proenzyme, found in Chlamydia caviae (strain ATCC VR-813 / DSM 19441 / 03DC25 / GPIC) (Chlamydophila caviae).